A 304-amino-acid chain; its full sequence is tRNA pseudouridine synthase B (304 aa).

The active-site Nucleophile is aspartate 38.

It belongs to the pseudouridine synthase TruB family. Type 1 subfamily.

The catalysed reaction is uridine(55) in tRNA = pseudouridine(55) in tRNA. Its function is as follows. Responsible for synthesis of pseudouridine from uracil-55 in the psi GC loop of transfer RNAs. The sequence is that of tRNA pseudouridine synthase B from Listeria monocytogenes serotype 4b (strain F2365).